Here is a 73-residue protein sequence, read N- to C-terminus: Somatostatin-2 (73 aa).

Residues 1–45 (SAGLLTQEWSAVEDLLAQMSLPEADAQRDAEMVSTATGGGRMNQE) constitute a propeptide that is removed on maturation. The disordered stretch occupies residues 23–58 (EADAQRDAEMVSTATGGGRMNQESIEPPNNLPPRER). A disulfide bridge connects residues C62 and C73.

Belongs to the somatostatin family.

Its subcellular location is the secreted. Its function is as follows. Somatostatin inhibits the release of somatotropin. In Platichthys flesus (European flounder), this protein is Somatostatin-2 (sst2).